Consider the following 79-residue polypeptide: Cytochrome b (79 aa).

A run of 3 helical transmembrane segments spans residues 1-7 (SALFLAM), 31-52 (WLIR…YLHI), and 67-79 (WNIG…LTMA). H37 and H51 together coordinate heme b.

It belongs to the cytochrome b family. The cytochrome bc1 complex contains 11 subunits: 3 respiratory subunits (MT-CYB, CYC1 and UQCRFS1), 2 core proteins (UQCRC1 and UQCRC2) and 6 low-molecular weight proteins (UQCRH/QCR6, UQCRB/QCR7, UQCRQ/QCR8, UQCR10/QCR9, UQCR11/QCR10 and a cleavage product of UQCRFS1). This cytochrome bc1 complex then forms a dimer. The cofactor is heme b.

It localises to the mitochondrion inner membrane. In terms of biological role, component of the ubiquinol-cytochrome c reductase complex (complex III or cytochrome b-c1 complex) that is part of the mitochondrial respiratory chain. The b-c1 complex mediates electron transfer from ubiquinol to cytochrome c. Contributes to the generation of a proton gradient across the mitochondrial membrane that is then used for ATP synthesis. This chain is Cytochrome b (MT-CYB), found in Dipodomys heermanni (Heermann's kangaroo rat).